A 1414-amino-acid polypeptide reads, in one-letter code: DNA-directed RNA polymerase subunit beta' (1414 aa).

4 residues coordinate Zn(2+): Cys-70, Cys-72, Cys-85, and Cys-88. Residues Asp-460, Asp-462, and Asp-464 each contribute to the Mg(2+) site. Residues Cys-815, Cys-889, Cys-896, and Cys-899 each contribute to the Zn(2+) site. Residues 1395-1414 form a disordered region; the sequence is EAEAQFADISSTPDSDTDAS.

This sequence belongs to the RNA polymerase beta' chain family. In terms of assembly, the RNAP catalytic core consists of 2 alpha, 1 beta, 1 beta' and 1 omega subunit. When a sigma factor is associated with the core the holoenzyme is formed, which can initiate transcription. Mg(2+) is required as a cofactor. The cofactor is Zn(2+).

The enzyme catalyses RNA(n) + a ribonucleoside 5'-triphosphate = RNA(n+1) + diphosphate. DNA-dependent RNA polymerase catalyzes the transcription of DNA into RNA using the four ribonucleoside triphosphates as substrates. This Herminiimonas arsenicoxydans protein is DNA-directed RNA polymerase subunit beta'.